A 339-amino-acid polypeptide reads, in one-letter code: tRNA N6-adenosine threonylcarbamoyltransferase (339 aa).

Fe cation-binding residues include H111 and H115. Substrate contacts are provided by residues 134–138, D167, G180, and N272; that span reads LVSGG. D300 provides a ligand contact to Fe cation.

Belongs to the KAE1 / TsaD family. Fe(2+) is required as a cofactor.

It localises to the cytoplasm. The catalysed reaction is L-threonylcarbamoyladenylate + adenosine(37) in tRNA = N(6)-L-threonylcarbamoyladenosine(37) in tRNA + AMP + H(+). Required for the formation of a threonylcarbamoyl group on adenosine at position 37 (t(6)A37) in tRNAs that read codons beginning with adenine. Is involved in the transfer of the threonylcarbamoyl moiety of threonylcarbamoyl-AMP (TC-AMP) to the N6 group of A37, together with TsaE and TsaB. TsaD likely plays a direct catalytic role in this reaction. This Vibrio vulnificus (strain YJ016) protein is tRNA N6-adenosine threonylcarbamoyltransferase.